Consider the following 2183-residue polypeptide: Coagulation factor V (2183 aa).

An N-terminal signal peptide occupies residues 1–19 (MLLVCPCFFLLVVLGTRWA). 4 Plastocyanin-like domains span residues 30-192 (QLRQ…LLIC), 202-328 (TQKM…IKNC), 347-524 (KRWE…LLIC), and 534-682 (VQRV…DVKC). 2 F5/8 type A domains span residues 30 to 328 (QLRQ…IKNC) and 347 to 682 (KRWE…DVKC). Ca(2+) is bound by residues Asp-138 and Asp-139. Asn-176, Asn-238, and Asn-381 each carry an N-linked (GlcNAc...) asparagine glycan. Thr-638 is subject to Phosphothreonine. The b stretch occupies residues 691–1533 (SYEIYEPPAP…PDTIAAWYLR (843 aa)). Sulfotyrosine is present on residues Tyr-692 and Tyr-725. A propeptide spans 737–1533 (SFKNSSLNPE…PDTIAAWYLR (797 aa)) (activation peptide (connecting region)). N-linked (GlcNAc...) asparagine glycosylation occurs at Asn-841. Disordered regions lie at residues 884 to 904 (PAGKTGRHSNPKNSYSGMKSE), 947 to 1045 (DVDK…FPDR), and 1059 to 1144 (ETAL…YDLS). Residues 892 to 908 (SNPKNSYSGMKSEEDIP) are 1 X 17 AA tandem repeats. One copy of the 1-1 repeat lies at 892-911 (SNPKNSYSGMKSEEDIPSEL). Position 903 is a phosphoserine (Ser-903). Over residues 951-975 (LTNSPQNQNITVPRGESTSHTNTTR) the composition is skewed to polar residues. 2 N-linked (GlcNAc...) asparagine glycosylation sites follow: Asn-959 and Asn-972. Residues 1010–1021 (RTRKKKKNKKLA) are compositionally biased toward basic residues. 2 stretches are compositionally biased toward polar residues: residues 1059 to 1099 (ETAL…SLDL) and 1120 to 1134 (THSTTDPSYRSSPPE). 32 repeat units span residues 1175 to 1183 (IPSSDLSLF), 1184 to 1192 (TISPELDQT), 1193 to 1201 (IIYPDLDQL), 1202 to 1210 (LLSPEDNQK), 1211 to 1219 (TSSPDLGQV), 1220 to 1228 (PLSPDDNQK), 1229 to 1237 (TSSPDLGQV), 1238 to 1246 (SLSPDDNQK), 1247 to 1255 (TSSPDLGQV), 1256 to 1264 (PLSLDDNQK), 1265 to 1273 (TTSPDLGQV), 1274 to 1282 (PLSPDDNQM), 1283 to 1291 (ITSPDLGQV), 1292 to 1299 (PLSSDNQK), 1300 to 1308 (TSSPDLGQV), 1309 to 1316 (PLFPEDNQ), 1317 to 1325 (NYFLDLSQV), 1326 to 1334 (PLSSDQNQE), 1335 to 1341 (TSSTDLL), 1342 to 1350 (TLSPDFGQT), 1351 to 1359 (VLSPDLDQL), 1360 to 1368 (PLPSDNSQV), 1369 to 1377 (TVSPDLSLL), 1378 to 1386 (TLSPDFNEI), 1387 to 1395 (ILAPDLGQV), 1396 to 1404 (TLSPDLIQT), 1405 to 1413 (NPALNHGHK), 1414 to 1422 (ASSADPDQA), 1423 to 1431 (SYPPDSGQA), 1432 to 1440 (SSLPELNRT), 1441 to 1449 (LPHPDLTHI), and 1452 to 1461 (PSPSPTLNNT). Residues 1175–1461 (IPSSDLSLFT…PSPSPTLNNT (287 aa)) form a 32 X 9 AA approximate tandem repeats of [TNP]-L-S-P-D-L-S-Q-T region. Positions 1204–1312 (SPEDNQKTSS…PDLGQVPLFP (109 aa)) are disordered. Residues 1228-1251 (KTSSPDLGQVSLSPDDNQKTSSPD) are compositionally biased toward polar residues. The span at 1292–1304 (PLSSDNQKTSSPD) shows a compositional bias: polar residues. Residues 1403–1462 (QTNPALNHGHKASSADPDQASYPPDSGQASSLPELNRTLPHPDLTHIPPPSPSPTLNNTS) are disordered. Asn-1438 is a glycosylation site (N-linked (GlcNAc...) asparagine). Plastocyanin-like domains follow at residues 1538 to 1711 (HKKF…LLIC) and 1721 to 1866 (NLPM…DKEC). An F5/8 type A 3 domain is found at 1538–1866 (HKKFYYIAAE…TPFLIIDKEC (329 aa)). Residues His-1802 and His-1804 each contribute to the Cu cation site. A glycan (N-linked (GlcNAc...) asparagine) is linked at Asn-1811. F5/8 type C domains are found at residues 1866-2020 (CKMP…LQGC) and 2025-2180 (CSTP…LFGC). Intrachain disulfides connect Cys-1866-Cys-2020 and Cys-2025-Cys-2180.

It belongs to the multicopper oxidase family. In terms of assembly, factor Va, the activated form of factor V, is composed of a heavy chain and a light chain, non-covalently bound. The interaction between the two chains is calcium-dependent. Forms heterodimer with SERPINA5. Post-translationally, thrombin activates factor V proteolytically to the active cofactor, factor Va (formation of a heavy chain at the N-terminus and a light chain at the C-terminus). Sulfation is required for efficient thrombin cleavage and activation and for full procoagulant activity. In terms of processing, activated protein C inactivates factor V and factor Va by proteolytic degradation.

It is found in the secreted. Inhibited by SERPINA5. Central regulator of hemostasis. It serves as a critical cofactor for the prothrombinase activity of factor Xa that results in the activation of prothrombin to thrombin. The protein is Coagulation factor V (F5) of Mus musculus (Mouse).